Reading from the N-terminus, the 844-residue chain is Translation initiation factor IF-2 (844 aa).

Over residues 120-132 (RNSVNLVQPQQEK) the composition is skewed to polar residues. The interval 120 to 220 (RNSVNLVQPQ…SGKGFKKANP (101 aa)) is disordered. Residues 161-175 (DEEKSSEDKSTESKN) show a composition bias toward basic and acidic residues. Basic residues predominate over residues 205–219 (SKAKKASGKGFKKAN). One can recognise a tr-type G domain in the interval 343–510 (SRAPVVTIMG…AVLLQSEVLE (168 aa)). A G1 region spans residues 352 to 359 (GHVDHGKT). 352–359 (GHVDHGKT) lines the GTP pocket. The G2 stretch occupies residues 377 to 381 (GITQH). The tract at residues 398–401 (DTPG) is G3. Residues 398-402 (DTPGH) and 452-455 (NKID) contribute to the GTP site. Residues 452–455 (NKID) form a G4 region. Residues 488-490 (SAK) form a G5 region.

It belongs to the TRAFAC class translation factor GTPase superfamily. Classic translation factor GTPase family. IF-2 subfamily.

It localises to the cytoplasm. Functionally, one of the essential components for the initiation of protein synthesis. Protects formylmethionyl-tRNA from spontaneous hydrolysis and promotes its binding to the 30S ribosomal subunits. Also involved in the hydrolysis of GTP during the formation of the 70S ribosomal complex. In Francisella philomiragia subsp. philomiragia (strain ATCC 25017 / CCUG 19701 / FSC 153 / O#319-036), this protein is Translation initiation factor IF-2.